A 312-amino-acid polypeptide reads, in one-letter code: MSYPESKLTGLTGFALAAKVTGGWAGPVVSITNLDQLKANIGTVTPQVLVINSNISASSLTKVNMGANKTLIGSFQNRTLENIHLRATAQSQNIILQNLIFKHSANIKANDDIQVYLNYGSKYWIDHCSFVGHSWSTTDGSEDKLLYIGEKADYATISNCFFGSHKYGLIFGHPADDNNAAFNGYPRLTLCHNRFDNMEVRAPGLMRYGYFHVYNNYINKFHLGFTLAQNANILSESNYFGEGSQNNGMLDDKGSGTFTDTNSVPPITNQKSPKAQWTATSNYAYTLKTAAQAKDFTQKNAGAQAAALVFGS.

Residue Arg201 is part of the active site. The disordered stretch occupies residues 254–274; the sequence is GSGTFTDTNSVPPITNQKSPK. Residues 256–274 show a composition bias toward polar residues; sequence GTFTDTNSVPPITNQKSPK.

It belongs to the polysaccharide lyase 1 family.

The enzyme catalyses Eliminative cleavage of (1-&gt;4)-alpha-D-galacturonan methyl ester to give oligosaccharides with 4-deoxy-6-O-methyl-alpha-D-galact-4-enuronosyl groups at their non-reducing ends.. This Pseudomonas marginalis (Pseudomonas panacis) protein is Pectin lyase (pnl).